The primary structure comprises 251 residues: Triosephosphate isomerase 1 (251 aa).

Residue 9 to 11 (NWK) participates in substrate binding. H95 serves as the catalytic Electrophile. Residue E167 is the Proton acceptor of the active site. Residues G173, S213, and 234–235 (GG) each bind substrate.

This sequence belongs to the triosephosphate isomerase family. As to quaternary structure, homodimer.

It localises to the cytoplasm. It catalyses the reaction D-glyceraldehyde 3-phosphate = dihydroxyacetone phosphate. It functions in the pathway carbohydrate biosynthesis; gluconeogenesis. Its pathway is carbohydrate degradation; glycolysis; D-glyceraldehyde 3-phosphate from glycerone phosphate: step 1/1. Involved in the gluconeogenesis. Catalyzes stereospecifically the conversion of dihydroxyacetone phosphate (DHAP) to D-glyceraldehyde-3-phosphate (G3P). The sequence is that of Triosephosphate isomerase 1 from Listeria innocua serovar 6a (strain ATCC BAA-680 / CLIP 11262).